Reading from the N-terminus, the 348-residue chain is Small ribosomal subunit biogenesis GTPase RsgA (348 aa).

Positions 1-32 (MAKQKLTQNQKRRIHSNNAKALDRHRRQTKKQ) are disordered. The region spanning 106-274 (KNELSRPDYY…LIDSPGIREF (169 aa)) is the CP-type G domain. Residues 162-165 (NKID) and 216-224 (GQSGVGKSS) contribute to the GTP site. Cysteine 298, cysteine 303, histidine 305, and cysteine 311 together coordinate Zn(2+).

This sequence belongs to the TRAFAC class YlqF/YawG GTPase family. RsgA subfamily. As to quaternary structure, monomer. Associates with 30S ribosomal subunit, binds 16S rRNA. It depends on Zn(2+) as a cofactor.

It localises to the cytoplasm. Its function is as follows. One of several proteins that assist in the late maturation steps of the functional core of the 30S ribosomal subunit. Helps release RbfA from mature subunits. May play a role in the assembly of ribosomal proteins into the subunit. Circularly permuted GTPase that catalyzes slow GTP hydrolysis, GTPase activity is stimulated by the 30S ribosomal subunit. This is Small ribosomal subunit biogenesis GTPase RsgA from Actinobacillus succinogenes (strain ATCC 55618 / DSM 22257 / CCUG 43843 / 130Z).